We begin with the raw amino-acid sequence, 513 residues long: ATP synthase subunit alpha (513 aa).

An ATP-binding site is contributed by 169 to 176 (GDRQIGKT).

Belongs to the ATPase alpha/beta chains family. In terms of assembly, F-type ATPases have 2 components, CF(1) - the catalytic core - and CF(0) - the membrane proton channel. CF(1) has five subunits: alpha(3), beta(3), gamma(1), delta(1), epsilon(1). CF(0) has three main subunits: a(1), b(2) and c(9-12). The alpha and beta chains form an alternating ring which encloses part of the gamma chain. CF(1) is attached to CF(0) by a central stalk formed by the gamma and epsilon chains, while a peripheral stalk is formed by the delta and b chains.

It is found in the cell inner membrane. The enzyme catalyses ATP + H2O + 4 H(+)(in) = ADP + phosphate + 5 H(+)(out). Produces ATP from ADP in the presence of a proton gradient across the membrane. The alpha chain is a regulatory subunit. The protein is ATP synthase subunit alpha of Francisella tularensis subsp. tularensis (strain WY96-3418).